Here is a 421-residue protein sequence, read N- to C-terminus: Peroxisomal succinyl-coenzyme A thioesterase (421 aa).

The active-site Charge relay system is the Ser232. At Lys313 the chain carries N6-succinyllysine. Active-site charge relay system residues include Asp326 and His360. A Microbody targeting signal motif is present at residues 419–421 (CRL).

Belongs to the C/M/P thioester hydrolase family. As to expression, mainly expressed in liver and kidney. Weakly expressed in other tissues including intestine, adrenal gland and adipose tissues.

It is found in the peroxisome. It carries out the reaction succinyl-CoA + H2O = succinate + CoA + H(+). It catalyses the reaction glutaryl-CoA + H2O = glutarate + CoA + H(+). Its pathway is lipid metabolism; fatty acid metabolism. Catalyzes the hydrolysis of acyl-CoAs into free fatty acids and coenzyme A (CoASH), regulating their respective intracellular levels. In contrast to its human ortholog, functions essentially as a succinyl-CoA thioesterase with no activity with medium to long chain saturated acyl-CoAs and with a low activity toward glutaryl-CoA. The sequence is that of Peroxisomal succinyl-coenzyme A thioesterase (Acot4) from Mus musculus (Mouse).